The sequence spans 831 residues: Serine/threonine-protein kinase ATG1 (831 aa).

One can recognise a Protein kinase domain in the interval 21-321 (YSVEKEIGKG…FTDFFNNEVV (301 aa)). ATP is bound by residues 27 to 35 (IGKGSFAVV) and lysine 50. The active-site Proton acceptor is aspartate 168. Composition is skewed to polar residues over residues 360 to 382 (QQESAHIPPTQTDENTSVQTGVR) and 405 to 419 (NSQNPEQSYQSASQK). The disordered stretch occupies residues 360-419 (QQESAHIPPTQTDENTSVQTGVRRTSGKERLATNHPPHQQIHPEDNSQNPEQSYQSASQK).

The protein belongs to the protein kinase superfamily. Ser/Thr protein kinase family. APG1/unc-51/ULK1 subfamily. Homodimer. Forms a ternary complex with ATG13 and ATG17.

Its subcellular location is the cytoplasm. It is found in the preautophagosomal structure membrane. The catalysed reaction is L-seryl-[protein] + ATP = O-phospho-L-seryl-[protein] + ADP + H(+). It carries out the reaction L-threonyl-[protein] + ATP = O-phospho-L-threonyl-[protein] + ADP + H(+). Its function is as follows. Serine/threonine protein kinase involved in the cytoplasm to vacuole transport (Cvt) and found to be essential in autophagy, where it is required for the formation of autophagosomes. Involved in the clearance of protein aggregates which cannot be efficiently cleared by the proteasome. Required for selective autophagic degradation of the nucleus (nucleophagy) as well as for mitophagy which contributes to regulate mitochondrial quantity and quality by eliminating the mitochondria to a basal level to fulfill cellular energy requirements and preventing excess ROS production. Also involved in endoplasmic reticulum-specific autophagic process, in selective removal of ER-associated degradation (ERAD) substrates. Plays a key role in ATG9 and ATG23 cycling through the pre-autophagosomal structure and is necessary to promote ATG18 binding to ATG9 through phosphorylation of ATG9. Catalyzes phosphorylation of ATG4, decreasing the interaction between ATG4 and ATG8 and impairing deconjugation of PE-conjugated forms of ATG8. The sequence is that of Serine/threonine-protein kinase ATG1 from Kluyveromyces lactis (strain ATCC 8585 / CBS 2359 / DSM 70799 / NBRC 1267 / NRRL Y-1140 / WM37) (Yeast).